A 287-amino-acid polypeptide reads, in one-letter code: Nucleotide-binding protein Ajs_0902 (287 aa).

Gly-10–Ser-17 contributes to the ATP binding site. Asp-59 to Ser-62 contributes to the GTP binding site.

The protein belongs to the RapZ-like family.

Functionally, displays ATPase and GTPase activities. The polypeptide is Nucleotide-binding protein Ajs_0902 (Acidovorax sp. (strain JS42)).